A 283-amino-acid polypeptide reads, in one-letter code: Small ribosomal subunit protein uS3 (283 aa).

One can recognise a KH type-2 domain in the interval 39 to 107 (VRAYLKTKLK…PVHVNIEEIR (69 aa)). The tract at residues 219–283 (ASDDDKKRRG…AAVSAEKAGE (65 aa)) is disordered. A compositionally biased stretch (basic and acidic residues) spans 221–236 (DDDKKRRGPRRDDGKP). Residues 237–260 (SGRPRAPRPEGQPGAAAPGSAPAA) are compositionally biased toward low complexity.

It belongs to the universal ribosomal protein uS3 family. Part of the 30S ribosomal subunit. Forms a tight complex with proteins S10 and S14.

Functionally, binds the lower part of the 30S subunit head. Binds mRNA in the 70S ribosome, positioning it for translation. The polypeptide is Small ribosomal subunit protein uS3 (Janthinobacterium sp. (strain Marseille) (Minibacterium massiliensis)).